The primary structure comprises 538 residues: Beta-1,4-mannosyl-glycoprotein 4-beta-N-acetylglucosaminyltransferase (538 aa).

At 1–7 (MKMRRYK) the chain is on the cytoplasmic side. The chain crosses the membrane as a helical; Signal-anchor for type II membrane protein span at residues 8–23 (LFLMFCMAGLCLISFL). At 24–538 (HFFKTLSYVT…VRGKLDTAEG (515 aa)) the chain is on the lumenal side. A disordered region spans residues 120-161 (PGTRMLEKPSPGRTEEKTEVSEGSSARGPARRPMRHVLSSRE). N-linked (GlcNAc...) asparagine glycans are attached at residues N245, N263, and N401. A disordered region spans residues 507-538 (REPKSTVEGGRQNQGSDGRSSAVRGKLDTAEG).

The protein belongs to the glycosyltransferase 17 family. Interacts with MGAT4D. In terms of tissue distribution, highly expressed in brain and kidney and to a much lesser extent in stomach, heart, intestine, uterus, testis, ovary and lung. Not present in spleen, liver and muscle. In brain, expressed in neurons of hippocampus.

It is found in the golgi apparatus membrane. The catalysed reaction is N(4)-{beta-D-GlcNAc-(1-&gt;2)-alpha-D-Man-(1-&gt;3)-[beta-D-GlcNAc-(1-&gt;2)-alpha-D-Man-(1-&gt;6)]-beta-D-Man-(1-&gt;4)-beta-D-GlcNAc-(1-&gt;4)-beta-D-GlcNAc}-L-asparaginyl-[protein] + UDP-N-acetyl-alpha-D-glucosamine = N(4)-{beta-D-GlcNAc-(1-&gt;2)-alpha-D-Man-(1-&gt;3)-[beta-D-GlcNAc-(1-&gt;4)]-[beta-D-GlcNAc-(1-&gt;2)-alpha-D-Man-(1-&gt;6)]-beta-D-Man-(1-&gt;4)-beta-D-GlcNAc-(1-&gt;4)-beta-D-GlcNAc}-L-asparaginyl-[protein] + UDP + H(+). It participates in protein modification; protein glycosylation. It is involved in the regulation of the biosynthesis and biological function of glycoprotein oligosaccharides. Catalyzes the addition of N-acetylglucosamine in beta 1-4 linkage to the beta-linked mannose of the trimannosyl core of N-linked sugar chains, called bisecting N-acetylglucosamine (GlcNAc). It is one of the most important enzymes involved in the regulation of the biosynthesis of glycoprotein oligosaccharides. The addition of this bisecting GlcNAc residue alters not only the composition, but also the conformation of the N-glycan. The introduction of the bisecting GlcNAc residue results in the suppression of further processing and elongation of N-glycans, precluding the formation of beta-1,6 GlcNAc branching, catalyzed by MGAT5 since it is unable to use the bisected oligosaccharide as a substrate. Addition of bisecting N-acetylglucosamine to CDH1/E-cadherin modulates CDH1 cell membrane location. Inhibits NeuAc-alpha-2,3-Gal-beta-1,4-GlcNAc- formation which modulates sialylation levels and plays a role in cell migration regulation. In brain, addition of bisecting N-acetylglucosamine to BACE1 blocks its lysosomal targeting in response to oxidative stress and further degradation which increases its location to early endosome and the APP cleavage. The sequence is that of Beta-1,4-mannosyl-glycoprotein 4-beta-N-acetylglucosaminyltransferase from Mus musculus (Mouse).